The sequence spans 361 residues: RNA 3'-terminal phosphate cyclase (361 aa).

ATP-binding positions include glutamine 109 and 293-297; that span reads HLADQ. The active-site Tele-AMP-histidine intermediate is histidine 319.

It belongs to the RNA 3'-terminal cyclase family. Type 1 subfamily.

It is found in the cytoplasm. It carries out the reaction a 3'-end 3'-phospho-ribonucleotide-RNA + ATP = a 3'-end 2',3'-cyclophospho-ribonucleotide-RNA + AMP + diphosphate. Its function is as follows. Catalyzes the conversion of 3'-phosphate to a 2',3'-cyclic phosphodiester at the end of RNA. The mechanism of action of the enzyme occurs in 3 steps: (A) adenylation of the enzyme by ATP; (B) transfer of adenylate to an RNA-N3'P to produce RNA-N3'PP5'A; (C) and attack of the adjacent 2'-hydroxyl on the 3'-phosphorus in the diester linkage to produce the cyclic end product. The biological role of this enzyme is unknown but it is likely to function in some aspects of cellular RNA processing. This is RNA 3'-terminal phosphate cyclase from Methylococcus capsulatus (strain ATCC 33009 / NCIMB 11132 / Bath).